Consider the following 140-residue polypeptide: uncharacterized protein (140 aa).

Residues 34–88 (PLRWRNRARNREKPHSPRAVSSPATHSLPPSNPCRLTPTLSSARPREGSCPSKCS) form a disordered region.

In terms of tissue distribution, expressed in a range of cell lines, including B-cell lymphoma and prostate.

This is an uncharacterized protein from Homo sapiens (Human).